We begin with the raw amino-acid sequence, 204 residues long: Histone H3-like centromeric protein CSE4 (204 aa).

The interval 68–107 (RVAEPAAAESRADGAREEERAARPARPRETRRIAKKPQRY) is disordered. Over residues 77–99 (SRADGAREEERAARPARPRETRR) the composition is skewed to basic and acidic residues. The interval 89–202 (ARPARPRETR…MQLARRIRGQ (114 aa)) is H3-like.

This sequence belongs to the histone H3 family. Component of centromeric nucleosomes, where DNA is wrapped around a histone octamer core. The octamer contains two molecules each of H2A, H2B, CSE4/CENPA and H4 assembled in one CSE4-H4 heterotetramer and two H2A-H2B heterodimers. Interacts with the inner kinetochore. In terms of processing, ubiquitinated. Is degraded through ubiquitin-mediated proteolysis when not protected by its association to the kinetochore.

The protein localises to the nucleus. The protein resides in the chromosome. Its subcellular location is the centromere. Functionally, histone H3-like nucleosomal protein that is specifically found in centromeric nucleosomes. Replaces conventional H3 in the nucleosome core of centromeric chromatin that serves as an assembly site for the inner kinetochore. Required for recruitment and assembly of kinetochore proteins, mitotic progression and chromosome segregation. May serve as an epigenetic mark that propagates centromere identity through replication and cell division. This chain is Histone H3-like centromeric protein CSE4 (CSE4), found in Eremothecium gossypii (strain ATCC 10895 / CBS 109.51 / FGSC 9923 / NRRL Y-1056) (Yeast).